The following is a 281-amino-acid chain: Putative phosphatase MPN_264 (281 aa).

Asp-8 acts as the Nucleophile in catalysis. A Mg(2+)-binding site is contributed by Asp-8. Leu-9 contacts phosphate. Asp-10 is a Mg(2+) binding site. Residues 44-45 and Lys-205 each bind phosphate; that span reads TG. Residues Asp-228 and Ser-229 each contribute to the Mg(2+) site. A phosphate-binding site is contributed by Asn-231.

This sequence belongs to the HAD-like hydrolase superfamily. Cof family. Mg(2+) is required as a cofactor.

This is Putative phosphatase MPN_264 from Mycoplasma pneumoniae (strain ATCC 29342 / M129 / Subtype 1) (Mycoplasmoides pneumoniae).